We begin with the raw amino-acid sequence, 47 residues long: Delta-actitoxin-Cgg1b (47 aa).

Hydroxyproline is present on Pro-3. 3 disulfide bridges follow: Cys-4–Cys-44, Cys-6–Cys-34, and Cys-27–Cys-45.

Belongs to the sea anemone sodium channel inhibitory toxin family. Type I subfamily.

It is found in the secreted. It localises to the nematocyst. Binds voltage-dependently at site 3 of sodium channels (Nav) and inhibits the inactivation, thereby blocking neuronal transmission. In Condylactis gigantea (Giant Caribbean anemone), this protein is Delta-actitoxin-Cgg1b.